We begin with the raw amino-acid sequence, 493 residues long: ATP synthase subunit beta (493 aa).

G169–T176 lines the ATP pocket.

The protein belongs to the ATPase alpha/beta chains family. As to quaternary structure, F-type ATPases have 2 components, CF(1) - the catalytic core - and CF(0) - the membrane proton channel. CF(1) has five subunits: alpha(3), beta(3), gamma(1), delta(1), epsilon(1). CF(0) has three main subunits: a(1), b(2) and c(9-12). The alpha and beta chains form an alternating ring which encloses part of the gamma chain. CF(1) is attached to CF(0) by a central stalk formed by the gamma and epsilon chains, while a peripheral stalk is formed by the delta and b chains.

Its subcellular location is the cell inner membrane. The enzyme catalyses ATP + H2O + 4 H(+)(in) = ADP + phosphate + 5 H(+)(out). Produces ATP from ADP in the presence of a proton gradient across the membrane. The catalytic sites are hosted primarily by the beta subunits. The protein is ATP synthase subunit beta of Gluconacetobacter diazotrophicus (strain ATCC 49037 / DSM 5601 / CCUG 37298 / CIP 103539 / LMG 7603 / PAl5).